We begin with the raw amino-acid sequence, 299 residues long: 6-phosphogluconate dehydrogenase, NAD(+)-dependent, decarboxylating (299 aa).

Residues 7–12 (GLGRMG), 67–69 (VPA), and Asn95 contribute to the NAD(+) site. Residues Asn95, Ser118, and Gly120 each coordinate substrate. Lys169 (proton acceptor) is an active-site residue. Residue 172-173 (HN) coordinates substrate. Residue Glu176 is the Proton donor of the active site. The substrate site is built by Tyr177 and Arg268.

The protein belongs to the 6-phosphogluconate dehydrogenase family. As to quaternary structure, homotetramer.

It catalyses the reaction 6-phospho-D-gluconate + NAD(+) = D-ribulose 5-phosphate + CO2 + NADH. It functions in the pathway carbohydrate degradation; pentose phosphate pathway. In terms of biological role, catalyzes the oxidative decarboxylation of 6-phosphogluconate to ribulose 5-phosphate and CO(2), with concomitant reduction of NAD to NADH. In Haloferax volcanii (strain ATCC 29605 / DSM 3757 / JCM 8879 / NBRC 14742 / NCIMB 2012 / VKM B-1768 / DS2) (Halobacterium volcanii), this protein is 6-phosphogluconate dehydrogenase, NAD(+)-dependent, decarboxylating.